The following is a 140-amino-acid chain: Large-conductance mechanosensitive channel (140 aa).

3 helical membrane passes run 7–27 (EFAF…GAAF), 30–50 (IITS…FGTV), and 64–84 (GLFV…FLFV).

Belongs to the MscL family. Homopentamer.

The protein resides in the cell membrane. Channel that opens in response to stretch forces in the membrane lipid bilayer. May participate in the regulation of osmotic pressure changes within the cell. This is Large-conductance mechanosensitive channel from Staphylococcus carnosus (strain TM300).